Consider the following 478-residue polypeptide: Dihydrolipoyl dehydrogenase (478 aa).

FAD is bound by residues 34-49 (EKYI…GGTC), K58, and G122. An intrachain disulfide couples C49 to C54. NAD(+) contacts are provided by residues 188–192 (GAGVI), E211, V245, and 276–279 (AVGR). D319 and A327 together coordinate FAD. Catalysis depends on H451, which acts as the Proton acceptor.

It belongs to the class-I pyridine nucleotide-disulfide oxidoreductase family. As to quaternary structure, homodimer. FAD is required as a cofactor.

The protein resides in the cytoplasm. It carries out the reaction N(6)-[(R)-dihydrolipoyl]-L-lysyl-[protein] + NAD(+) = N(6)-[(R)-lipoyl]-L-lysyl-[protein] + NADH + H(+). In terms of biological role, the branched-chain alpha-keto dehydrogenase complex catalyzes the overall conversion of alpha-keto acids to acyl-CoA and CO(2). It contains multiple copies of 3 enzymatic components: branched-chain alpha-keto acid decarboxylase (E1), lipoamide acyltransferase (E2) and lipoamide dehydrogenase (E3). The chain is Dihydrolipoyl dehydrogenase (lpd) from Pseudomonas fluorescens.